Consider the following 300-residue polypeptide: GTPase Era (300 aa).

Positions K4 to K173 constitute an Era-type G domain. A G1 region spans residues G12–S19. G12 to S19 lines the GTP pocket. The segment at Q38–N42 is G2. Residues D59–G62 are G3. GTP contacts are provided by residues D59 to F63 and S122 to E125. Residues S122–E125 form a G4 region. The segment at I152 to A154 is G5. The KH type-2 domain occupies L204–N282.

It belongs to the TRAFAC class TrmE-Era-EngA-EngB-Septin-like GTPase superfamily. Era GTPase family. As to quaternary structure, monomer.

The protein localises to the cytoplasm. It localises to the cell membrane. Functionally, an essential GTPase that binds both GDP and GTP, with rapid nucleotide exchange. Plays a role in 16S rRNA processing and 30S ribosomal subunit biogenesis and possibly also in cell cycle regulation and energy metabolism. This Ureaplasma parvum serovar 3 (strain ATCC 27815 / 27 / NCTC 11736) protein is GTPase Era.